Reading from the N-terminus, the 198-residue chain is Nucleoid occlusion factor SlmA (198 aa).

In terms of domain architecture, HTH tetR-type spans 9-70 (RNRREEILQA…SLIEFIEDSL (62 aa)). The H-T-H motif DNA-binding region spans 33-52 (TTAKLAANVGVSEAALYRHF). Positions 119 to 144 (DRLQGRINQLFERIEVQLRQVLREKK) form a coiled coil.

It belongs to the nucleoid occlusion factor SlmA family. Homodimer. Interacts with FtsZ.

Its subcellular location is the cytoplasm. It is found in the nucleoid. In terms of biological role, required for nucleoid occlusion (NO) phenomenon, which prevents Z-ring formation and cell division over the nucleoid. Acts as a DNA-associated cell division inhibitor that binds simultaneously chromosomal DNA and FtsZ, and disrupts the assembly of FtsZ polymers. SlmA-DNA-binding sequences (SBS) are dispersed on non-Ter regions of the chromosome, preventing FtsZ polymerization at these regions. In Yersinia enterocolitica serotype O:8 / biotype 1B (strain NCTC 13174 / 8081), this protein is Nucleoid occlusion factor SlmA.